We begin with the raw amino-acid sequence, 262 residues long: Carbohydrate deacetylase (262 aa).

Histidine 129 lines the Mg(2+) pocket.

The protein belongs to the YdjC deacetylase family. In terms of assembly, homodimer. Mg(2+) serves as cofactor.

In terms of biological role, probably catalyzes the deacetylation of acetylated carbohydrates an important step in the degradation of oligosaccharides. This is Carbohydrate deacetylase from Enterococcus faecalis (strain ATCC 700802 / V583).